The sequence spans 199 residues: Protein-L-isoaspartate O-methyltransferase (199 aa).

The active site involves serine 51.

The protein belongs to the methyltransferase superfamily. L-isoaspartyl/D-aspartyl protein methyltransferase family.

The protein localises to the cytoplasm. The enzyme catalyses [protein]-L-isoaspartate + S-adenosyl-L-methionine = [protein]-L-isoaspartate alpha-methyl ester + S-adenosyl-L-homocysteine. Catalyzes the methyl esterification of L-isoaspartyl residues in peptides and proteins that result from spontaneous decomposition of normal L-aspartyl and L-asparaginyl residues. It plays a role in the repair and/or degradation of damaged proteins. The sequence is that of Protein-L-isoaspartate O-methyltransferase from Fervidobacterium nodosum (strain ATCC 35602 / DSM 5306 / Rt17-B1).